The sequence spans 627 residues: Monoterpene synthase like 1, chloroplastic (627 aa).

Residues 1 to 50 (MDLISVLPSTSKSCVCMHKPLSSSTHKLKPFCRTIRILGMPRPRKSVLMA) constitute a chloroplast transit peptide. Mg(2+)-binding residues include Asp378, Asp382, and Asp530. The short motif at 378–382 (DDMYD) is the DDXXD motif element.

Belongs to the terpene synthase family. Tpsd subfamily. Requires Mg(2+) as cofactor. Mn(2+) serves as cofactor.

It is found in the plastid. Its subcellular location is the chloroplast. The protein operates within terpene metabolism; oleoresin biosynthesis. It functions in the pathway secondary metabolite biosynthesis; terpenoid biosynthesis. In terms of biological role, monoterpene synthase (TPS) involved in the biosynthesis of monoterpene natural products included in conifer oleoresin secretions and volatile emissions; these compounds contribute to biotic and abiotic stress defense against herbivores and pathogens. This Pinus contorta (Shore pine) protein is Monoterpene synthase like 1, chloroplastic.